The sequence spans 413 residues: Multifunctional CCA protein (413 aa).

2 residues coordinate ATP: glycine 8 and arginine 11. Residues glycine 8 and arginine 11 each coordinate CTP. 2 residues coordinate Mg(2+): aspartate 21 and aspartate 23. ATP is bound by residues arginine 91, arginine 137, and arginine 140. CTP is bound by residues arginine 91, arginine 137, and arginine 140. The region spanning 228–329 (TGIHTLMVLA…LKVFDKADAW (102 aa)) is the HD domain.

It belongs to the tRNA nucleotidyltransferase/poly(A) polymerase family. Bacterial CCA-adding enzyme type 1 subfamily. Monomer. Can also form homodimers and oligomers. It depends on Mg(2+) as a cofactor. Ni(2+) is required as a cofactor.

It carries out the reaction a tRNA precursor + 2 CTP + ATP = a tRNA with a 3' CCA end + 3 diphosphate. The catalysed reaction is a tRNA with a 3' CCA end + 2 CTP + ATP = a tRNA with a 3' CCACCA end + 3 diphosphate. Its function is as follows. Catalyzes the addition and repair of the essential 3'-terminal CCA sequence in tRNAs without using a nucleic acid template. Adds these three nucleotides in the order of C, C, and A to the tRNA nucleotide-73, using CTP and ATP as substrates and producing inorganic pyrophosphate. tRNA 3'-terminal CCA addition is required both for tRNA processing and repair. Also involved in tRNA surveillance by mediating tandem CCA addition to generate a CCACCA at the 3' terminus of unstable tRNAs. While stable tRNAs receive only 3'-terminal CCA, unstable tRNAs are marked with CCACCA and rapidly degraded. The protein is Multifunctional CCA protein of Aeromonas salmonicida (strain A449).